Reading from the N-terminus, the 284-residue chain is Diaminopimelate epimerase (284 aa).

Asn20, Gln53, and Asn73 together coordinate substrate. The active-site Proton donor is the Cys82. Residues Gly83–Asn84, Asn167, Asn200, and Glu218–Arg219 each bind substrate. Residue Cys227 is the Proton acceptor of the active site. Position 228–229 (Gly228–Ser229) interacts with substrate.

This sequence belongs to the diaminopimelate epimerase family. In terms of assembly, homodimer.

Its subcellular location is the cytoplasm. It carries out the reaction (2S,6S)-2,6-diaminopimelate = meso-2,6-diaminopimelate. Its pathway is amino-acid biosynthesis; L-lysine biosynthesis via DAP pathway; DL-2,6-diaminopimelate from LL-2,6-diaminopimelate: step 1/1. In terms of biological role, catalyzes the stereoinversion of LL-2,6-diaminopimelate (L,L-DAP) to meso-diaminopimelate (meso-DAP), a precursor of L-lysine and an essential component of the bacterial peptidoglycan. The sequence is that of Diaminopimelate epimerase from Xylella fastidiosa (strain 9a5c).